The primary structure comprises 338 residues: Anthranilate phosphoribosyltransferase (338 aa).

5-phospho-alpha-D-ribose 1-diphosphate-binding positions include Gly-81, 84-85, Thr-89, 91-94, 109-117, and Ala-121; these read GD, NIST, and KHGNRNLSS. Gly-81 serves as a coordination point for anthranilate. Ser-93 serves as a coordination point for Mg(2+). Asn-112 contributes to the anthranilate binding site. Residue Arg-167 coordinates anthranilate. Residues Asp-226 and Glu-227 each contribute to the Mg(2+) site.

This sequence belongs to the anthranilate phosphoribosyltransferase family. Homodimer. The cofactor is Mg(2+).

The catalysed reaction is N-(5-phospho-beta-D-ribosyl)anthranilate + diphosphate = 5-phospho-alpha-D-ribose 1-diphosphate + anthranilate. The protein operates within amino-acid biosynthesis; L-tryptophan biosynthesis; L-tryptophan from chorismate: step 2/5. In terms of biological role, catalyzes the transfer of the phosphoribosyl group of 5-phosphorylribose-1-pyrophosphate (PRPP) to anthranilate to yield N-(5'-phosphoribosyl)-anthranilate (PRA). This Cereibacter sphaeroides (strain KD131 / KCTC 12085) (Rhodobacter sphaeroides) protein is Anthranilate phosphoribosyltransferase.